We begin with the raw amino-acid sequence, 125 residues long: Small ribosomal subunit protein uS12m (125 aa).

Positions 1-50 are disordered; that stretch reads MPSLNQLIRHGREEKRRTDRTRALDQCPQKQGVCPRVSTRTPKKPNSAPR. The segment covering 10–23 has biased composition (basic and acidic residues); that stretch reads HGREEKRRTDRTRA.

This sequence belongs to the universal ribosomal protein uS12 family.

Its subcellular location is the mitochondrion. Protein S12 is involved in the translation initiation step. The chain is Small ribosomal subunit protein uS12m (RPS12) from Petunia hybrida (Petunia).